The chain runs to 272 residues: GPN-loop GTPase 3 (272 aa).

A GTP-binding site is contributed by 13-18; that stretch reads GAGKST. Residues 70–72 carry the Gly-Pro-Asn (GPN)-loop; involved in dimer interface motif; sequence GPN. 173–176 lines the GTP pocket; sequence SKLD.

It belongs to the GPN-loop GTPase family. Heterodimers with NPA3/GPN1 or GPN2. Binds to RNA polymerase II (RNAPII).

In terms of biological role, small GTPase required for proper nuclear localization of RNA polymerase II and III (RNAPII and RNAPIII). May act at an RNAP assembly step prior to nuclear import. Promotes sister chromatid separation during anaphase. The protein is GPN-loop GTPase 3 of Saccharomyces cerevisiae (strain ATCC 204508 / S288c) (Baker's yeast).